The sequence spans 126 residues: Large ribosomal subunit protein bL12 (126 aa).

It belongs to the bacterial ribosomal protein bL12 family. Homodimer. Part of the ribosomal stalk of the 50S ribosomal subunit. Forms a multimeric L10(L12)X complex, where L10 forms an elongated spine to which 2 to 4 L12 dimers bind in a sequential fashion. Binds GTP-bound translation factors.

Functionally, forms part of the ribosomal stalk which helps the ribosome interact with GTP-bound translation factors. Is thus essential for accurate translation. The protein is Large ribosomal subunit protein bL12 of Caulobacter sp. (strain K31).